Here is a 420-residue protein sequence, read N- to C-terminus: Fasciclin-like arabinogalactan protein 8 (420 aa).

A signal peptide spans 1 to 25; it reads MAASQTFSLLAFTFSLLAFASTVSS. FAS1 domains follow at residues 26-172 and 186-326; these read HNIT…DAPI and SLSN…DNVL. Residues N27, N128, N162, N189, and N273 are each glycosylated (N-linked (GlcNAc...) asparagine). The disordered stretch occupies residues 335-394; it reads SKSPSPAPAPEPVTAPTPSPADAPSPTAASPPAPPTDESPESAPSDSPTGSANSKSANAA. The segment covering 339-371 has biased composition (pro residues); sequence SPAPAPEPVTAPTPSPADAPSPTAASPPAPPTD. The GPI-anchor amidated asparagine moiety is linked to residue N392. The propeptide at 393–420 is removed in mature form; the sequence is AAVGVSTPSLFTALVTIAAIAVSVSLCS.

This sequence belongs to the fasciclin-like AGP family. As to expression, expressed mainly in flowers and to a lesser extent in leaves and roots.

Its subcellular location is the cell membrane. Functionally, may be a cell surface adhesion protein. In Arabidopsis thaliana (Mouse-ear cress), this protein is Fasciclin-like arabinogalactan protein 8 (FLA8).